We begin with the raw amino-acid sequence, 176 residues long: Cytochrome b (176 aa).

3 helical membrane passes run 33–53 (FGSLLGICLTIQILTGLFLAM), 77–98 (WLLRYLHANGASMFFICLYLHV), and 113–133 (WNMGIILLFAVMATAFMGYVL). Heme b is bound by residues histidine 83 and histidine 97.

Belongs to the cytochrome b family. In terms of assembly, the cytochrome bc1 complex contains 11 subunits: 3 respiratory subunits (MT-CYB, CYC1 and UQCRFS1), 2 core proteins (UQCRC1 and UQCRC2) and 6 low-molecular weight proteins (UQCRH/QCR6, UQCRB/QCR7, UQCRQ/QCR8, UQCR10/QCR9, UQCR11/QCR10 and a cleavage product of UQCRFS1). This cytochrome bc1 complex then forms a dimer. The cofactor is heme b.

The protein localises to the mitochondrion inner membrane. Its function is as follows. Component of the ubiquinol-cytochrome c reductase complex (complex III or cytochrome b-c1 complex) that is part of the mitochondrial respiratory chain. The b-c1 complex mediates electron transfer from ubiquinol to cytochrome c. Contributes to the generation of a proton gradient across the mitochondrial membrane that is then used for ATP synthesis. In Tomopeas ravum (Blunt-eared bat), this protein is Cytochrome b (MT-CYB).